Reading from the N-terminus, the 414-residue chain is MRKFMTTTAVAALMLAATAARAAENVEVLHWWTSGGEAAALDVLKKDLESKGISWTDMPVAGGGGTEAMTVLRARVTAGNAPTAVQMLGFDILDWAKEGALGNLDEVAAKEGWDKVVPAALQQFSKYDGHWIAAPVNVHSTNWVWINKAALDKAGAKEPTTWEELIALLDKFKEQGITPIAHGGQPWQDATIFDAVVLSLGNDFYKQAFIDLDPAALGGDKMKEAFDRMTKLRSYVDDNFSGRDWNLASAMVIENKAGLQFMGDWAKGEFLKAKKVPGTDFVCMRFPGTQGSVTFNSDQFAMFKVSEDKVPAQLQMASAIESPAFQSAFNVVKGSVPARTDVPDTDFDACGKKGIKDLAEANTNGTLFGSMAHGHANPAAVKNAIYDVVTRQFNGELNSEEAVTELVAAVEAAK.

The first 22 residues, 1–22 (MRKFMTTTAVAALMLAATAARA), serve as a signal peptide directing secretion.

This sequence belongs to the bacterial solute-binding protein 1 family.

Its subcellular location is the periplasm. Functionally, part of a binding-protein-dependent transport system for a sugar. This is Probable sugar-binding periplasmic protein from Rhizobium meliloti (strain 1021) (Ensifer meliloti).